The sequence spans 599 residues: MARSNRRGGRGDPEDDPAWAPPGHRCAGERAVGGPTVIPRAYLPAVPAGGNESRAFQGRFVDPWFSGIRTGYVIWDGGRLLGVTRNEPEHADVIDVDGIICPGFVDAHVHVESSGLRPARYAEIVVREGTTAVVWDPHEVVNVSGELGLEWAVKTAEEALPFKFYIALPSCVPALGPPYETVEGEITVDVARKFASHPMVVSVGELMDVAGVMEGEKDEFIELKSLYGLTVDGHAPGLTGFEAMRYFAAGPETDHECSTAEEFTSRRELGVWTFVRQGSSSKDMEVALETLEDLRGVCFVTDDLHVKDMDEISLRKIVGRAIEAGFDPLESLSAVTLNPSLCYGLQSGRLVPGFHADIVVVEDLDENMELTDVWIGGKRSERVRFRDAEAELPDVELSVDPREVSFQDGKYEVRCVGLVRGSIRTEEIVREITVKDGAVKDDDVAFLVVTDRYGQGSWSIGFVEGFEELDCAVVSTVAHDSHNVVVAGRRLDDVRRALQLVSEVGGCVGAVAGDRAEFVRLDVAGLMSSSDPEEVKKSYEDVLELIRSSSGVDWDPFQALSFVTLPVVPELRLTDRGLVKVEPDEIRFVDIITDGDPVE.

Residues 1–31 form a disordered region; sequence MARSNRRGGRGDPEDDPAWAPPGHRCAGERA.

Belongs to the metallo-dependent hydrolases superfamily. Adenine deaminase family. Mn(2+) is required as a cofactor.

The catalysed reaction is adenine + H2O + H(+) = hypoxanthine + NH4(+). This is Adenine deaminase from Methanopyrus kandleri (strain AV19 / DSM 6324 / JCM 9639 / NBRC 100938).